A 196-amino-acid polypeptide reads, in one-letter code: Cilia- and flagella-associated protein 107 (196 aa).

Mn stretches follow at residues 47-62 and 97-109; these read TPQC…MPDH and ISTY…RHNY.

As to quaternary structure, microtubule inner protein component of sperm flagellar doublet microtubules.

It localises to the cytoplasm. It is found in the cytoskeleton. The protein localises to the cilium axoneme. Its subcellular location is the flagellum axoneme. Its function is as follows. Microtubule inner protein (MIP) part of the dynein-decorated doublet microtubules (DMTs) in cilia axoneme, which is required for motile cilia beating. In Mus musculus (Mouse), this protein is Cilia- and flagella-associated protein 107.